We begin with the raw amino-acid sequence, 219 residues long: Orotate phosphoribosyltransferase (219 aa).

Position 26 (Lys26) interacts with 5-phospho-alpha-D-ribose 1-diphosphate. 34–35 (FF) is an orotate binding site. Residues 72 to 73 (YK), Arg102, Lys103, Lys106, His108, and 128 to 136 (DDVITAGTA) contribute to the 5-phospho-alpha-D-ribose 1-diphosphate site. Positions 132 and 160 each coordinate orotate.

Belongs to the purine/pyrimidine phosphoribosyltransferase family. PyrE subfamily. In terms of assembly, homodimer.

The enzyme catalyses orotidine 5'-phosphate + diphosphate = orotate + 5-phospho-alpha-D-ribose 1-diphosphate. Its pathway is pyrimidine metabolism; UMP biosynthesis via de novo pathway; UMP from orotate: step 1/2. Functionally, catalyzes the transfer of a ribosyl phosphate group from 5-phosphoribose 1-diphosphate to orotate, leading to the formation of orotidine monophosphate (OMP). This Yarrowia lipolytica (strain CLIB 122 / E 150) (Yeast) protein is Orotate phosphoribosyltransferase (URA5).